Consider the following 266-residue polypeptide: Signal peptidase I (266 aa).

The Cytoplasmic portion of the chain corresponds to 1–20 (MQTDNTKSNTNKTAKQEWGS). The helical transmembrane segment at 21–41 (FAFVICIALLIRILIMEPFNV) threads the bilayer. Residues 42-266 (PTGSMKATIL…IFRNLYNTDA (225 aa)) lie on the Extracellular side of the membrane. Catalysis depends on residues Ser-45 and Lys-108.

It belongs to the peptidase S26 family.

The protein resides in the cell membrane. It carries out the reaction Cleavage of hydrophobic, N-terminal signal or leader sequences from secreted and periplasmic proteins.. The polypeptide is Signal peptidase I (lepB) (Rickettsia conorii (strain ATCC VR-613 / Malish 7)).